Consider the following 246-residue polypeptide: UDP-N-acetyl-D-mannosaminuronic acid transferase (246 aa).

Belongs to the glycosyltransferase 26 family.

It catalyses the reaction UDP-N-acetyl-alpha-D-mannosaminouronate + N-acetyl-alpha-D-glucosaminyl-di-trans,octa-cis-undecaprenyl diphosphate = beta-D-ManNAcA-(1-&gt;4)-alpha-D-GlcNAc-di-trans,octa-cis-undecaprenyl diphosphate + UDP + H(+). It participates in bacterial outer membrane biogenesis; enterobacterial common antigen biosynthesis. Its function is as follows. Catalyzes the synthesis of Und-PP-GlcNAc-ManNAcA (Lipid II), the second lipid-linked intermediate involved in enterobacterial common antigen (ECA) synthesis. This chain is UDP-N-acetyl-D-mannosaminuronic acid transferase, found in Citrobacter koseri (strain ATCC BAA-895 / CDC 4225-83 / SGSC4696).